The following is a 114-amino-acid chain: Nucleoid-associated protein CKL_3826 (114 aa).

This sequence belongs to the YbaB/EbfC family. As to quaternary structure, homodimer.

The protein localises to the cytoplasm. It is found in the nucleoid. Its function is as follows. Binds to DNA and alters its conformation. May be involved in regulation of gene expression, nucleoid organization and DNA protection. The protein is Nucleoid-associated protein CKL_3826 of Clostridium kluyveri (strain ATCC 8527 / DSM 555 / NBRC 12016 / NCIMB 10680 / K1).